Consider the following 407-residue polypeptide: Probable endo-beta-1,4-glucanase celB (407 aa).

The signal sequence occupies residues 1–18 (MAQTLAAASLVLVPLVTA). Asparagine 136 carries N-linked (GlcNAc...) asparagine glycosylation. The active-site Nucleophile is glutamate 216. Glutamate 221 serves as the catalytic Proton donor.

The protein belongs to the glycosyl hydrolase 7 (cellulase C) family.

It localises to the secreted. The enzyme catalyses Endohydrolysis of (1-&gt;4)-beta-D-glucosidic linkages in cellulose, lichenin and cereal beta-D-glucans.. Has endoglucanase activity on substrates containing beta-1,4 glycosidic bonds, like in carboxymethylcellulose (CMC), hydroxyethylcellulose (HEC) and beta-glucan. Involved in the degradation of complex natural cellulosic substrates. The polypeptide is Probable endo-beta-1,4-glucanase celB (celB) (Aspergillus fumigatus (strain ATCC MYA-4609 / CBS 101355 / FGSC A1100 / Af293) (Neosartorya fumigata)).